Consider the following 106-residue polypeptide: Large ribosomal subunit protein P1B (106 aa).

Ser2 is modified (N-acetylserine). Over residues 69–82 (AGAASGAAAAGGDA) the composition is skewed to low complexity. The tract at residues 69-106 (AGAASGAAAAGGDAAAEEEKEEEAAEESDDDMGFGLFD) is disordered. Acidic residues predominate over residues 83-100 (AAEEEKEEEAAEESDDDM). The residue at position 96 (Ser96) is a Phosphoserine.

The protein belongs to the eukaryotic ribosomal protein P1/P2 family. In terms of assembly, component of the large ribosomal subunit (LSU). Mature yeast ribosomes consist of a small (40S) and a large (60S) subunit. The 40S small subunit contains 1 molecule of ribosomal RNA (18S rRNA) and 33 different proteins (encoded by 57 genes). The large 60S subunit contains 3 rRNA molecules (25S, 5.8S and 5S rRNA) and 46 different proteins (encoded by 81 genes). The 5 acidic ribosomal P-proteins form the stalk structure of the 60S subunit. They are organized as a pentameric complex in which uL10/P0 interacts with 2 heterodimers, P1A-P2B and P1B-P2A.

The protein resides in the cytoplasm. Its function is as follows. Component of the ribosome, a large ribonucleoprotein complex responsible for the synthesis of proteins in the cell. The small ribosomal subunit (SSU) binds messenger RNAs (mRNAs) and translates the encoded message by selecting cognate aminoacyl-transfer RNA (tRNA) molecules. The large subunit (LSU) contains the ribosomal catalytic site termed the peptidyl transferase center (PTC), which catalyzes the formation of peptide bonds, thereby polymerizing the amino acids delivered by tRNAs into a polypeptide chain. The nascent polypeptides leave the ribosome through a tunnel in the LSU and interact with protein factors that function in enzymatic processing, targeting, and the membrane insertion of nascent chains at the exit of the ribosomal tunnel. This is Large ribosomal subunit protein P1B from Saccharomyces cerevisiae (strain ATCC 204508 / S288c) (Baker's yeast).